Reading from the N-terminus, the 1155-residue chain is DNA-directed RNA polymerase subunit beta (1155 aa).

Belongs to the RNA polymerase beta chain family. The RNAP catalytic core consists of 2 alpha, 1 beta, 1 beta' and 1 omega subunit. When a sigma factor is associated with the core the holoenzyme is formed, which can initiate transcription.

The catalysed reaction is RNA(n) + a ribonucleoside 5'-triphosphate = RNA(n+1) + diphosphate. In terms of biological role, DNA-dependent RNA polymerase catalyzes the transcription of DNA into RNA using the four ribonucleoside triphosphates as substrates. The protein is DNA-directed RNA polymerase subunit beta of Borrelia hermsii (strain HS1 / DAH).